The primary structure comprises 1057 residues: Histone deacetylase complex subunit SAP130 (1057 aa).

Residues Met1–Pro69 form a disordered region. A compositionally biased stretch (polar residues) spans Pro14–Ser28. Positions Glu41–Val54 are enriched in basic and acidic residues. Arg206 bears the Omega-N-methylarginine mark. Thr329 carries the phosphothreonine modification. Phosphoserine is present on residues Ser416 and Ser439. Disordered regions lie at residues Thr619–Val695 and Pro718–Ala740. Polar residues predominate over residues Thr620–Arg641. Residue Lys794 forms a Glycyl lysine isopeptide (Lys-Gly) (interchain with G-Cter in SUMO2) linkage. The interval Asn827–Lys873 is disordered. An interactions with SIN3A and HDAC1 region spans residues Pro845 to Val1057. Residue Ser864 is modified to Phosphoserine. Phosphothreonine is present on Thr865. Residues Lys873 and Lys878 each participate in a glycyl lysine isopeptide (Lys-Gly) (interchain with G-Cter in SUMO2) cross-link. Position 884 is a phosphoserine (Ser884).

It belongs to the SAP130 family. In terms of assembly, component of a mSin3A corepressor complex that contains SIN3A, SAP130, SUDS3/SAP45, ARID4B/SAP180, HDAC1 and HDAC2. Interacts (released by dead or dying cells) with CLEC4E. Acetylated. In terms of processing, sumoylated with SUMO1.

It is found in the nucleus. In terms of biological role, acts as a transcriptional repressor. May function in the assembly and/or enzymatic activity of the mSin3A corepressor complex or in mediating interactions between the complex and other regulatory complexes. This is Histone deacetylase complex subunit SAP130 (Sap130) from Mus musculus (Mouse).